A 137-amino-acid chain; its full sequence is Putative pre-16S rRNA nuclease (137 aa).

It belongs to the YqgF nuclease family.

The protein resides in the cytoplasm. Its function is as follows. Could be a nuclease involved in processing of the 5'-end of pre-16S rRNA. This Chromobacterium violaceum (strain ATCC 12472 / DSM 30191 / JCM 1249 / CCUG 213 / NBRC 12614 / NCIMB 9131 / NCTC 9757 / MK) protein is Putative pre-16S rRNA nuclease.